Here is a 331-residue protein sequence, read N- to C-terminus: UDP-xylose and UDP-N-acetylglucosamine transporter (331 aa).

10 consecutive transmembrane segments (helical) span residues 5-25, 30-50, 59-79, 92-112, 122-142, 153-173, 201-221, 238-260, 267-289, and 301-321; these read FAVTLVFVGCCSNVVFLELLV, GCGNIVTFAQFAFIALEGFIF, PQIPLSNYVIMVTMFFTVSVI, LHMIFRSGSLIANMILGIIIL, LSIVLVSVGIFICTIMSAKQV, GVYAFMHWLLGIAMLTFALLM, CLPLPGFLLLSTNIYNHAVLF, VMWFYLLMNVITQYVCIRGVFIL, LTVTLVVTLRKFLSLIISILYFQ, and AVVFLGTLLYTEVLSSIPAAF.

The protein belongs to the nucleotide-sugar transporter family. SLC35B subfamily.

Its subcellular location is the golgi apparatus membrane. Sugar transporter that specifically mediates the transport of UDP-xylose (UDP-Xyl) and UDP-N-acetylglucosamine (UDP-GlcNAc) from cytosol into Golgi. This is UDP-xylose and UDP-N-acetylglucosamine transporter (slc35b4) from Danio rerio (Zebrafish).